The following is a 1029-amino-acid chain: Translation initiation factor IF-2 (1029 aa).

The interval 73–441 is disordered; the sequence is RELRSEEDDG…RQRRRERKRE (369 aa). Acidic residues-rich tracts occupy residues 106 to 121 and 148 to 177; these read TAEE…DEEE and AEAE…DEAE. A compositionally biased stretch (basic and acidic residues) spans 183-196; that stretch reads AADKDAAAIADEQK. Acidic residues-rich tracts occupy residues 213-234, 242-258, and 279-322; these read TGEE…DAEA, TEAE…AEDV, and APDE…DEEG. Residues 358-372 are compositionally biased toward basic and acidic residues; the sequence is KDKDKDKSSKKDKKD. Residues 373–386 are compositionally biased toward basic residues; sequence KSNKKSKSKGKKQK. The segment covering 400 to 411 has biased composition (low complexity); sequence QTLQETLQELEQ. The segment covering 417-427 has biased composition (basic residues); that stretch reads RQRRRRRRRKR. The segment covering 428–441 has biased composition (basic and acidic residues); sequence HEEERQRRRERKRE. The region spanning 524 to 696 is the tr-type G domain; it reads PRAPVVTVMG…LLQSEIMELK (173 aa). The tract at residues 533–540 is G1; the sequence is GHVDHGKT. Residue 533-540 coordinates GTP; sequence GHVDHGKT. A G2 region spans residues 558-562; that stretch reads GITQH. A G3 region spans residues 582–585; that stretch reads DTPG. GTP contacts are provided by residues 582-586 and 636-639; these read DTPGH and NKMD. The G4 stretch occupies residues 636-639; the sequence is NKMD. A G5 region spans residues 672–674; it reads SAK.

Belongs to the TRAFAC class translation factor GTPase superfamily. Classic translation factor GTPase family. IF-2 subfamily.

It localises to the cytoplasm. In terms of biological role, one of the essential components for the initiation of protein synthesis. Protects formylmethionyl-tRNA from spontaneous hydrolysis and promotes its binding to the 30S ribosomal subunits. Also involved in the hydrolysis of GTP during the formation of the 70S ribosomal complex. This Salinibacter ruber (strain DSM 13855 / M31) protein is Translation initiation factor IF-2.